A 237-amino-acid chain; its full sequence is uncharacterized protein (237 aa).

A GP-PDE domain is found at 4-237; the sequence is QFLIAHRGYS…VKFQIAAQLY (234 aa).

This sequence to glycerophosphoryl diester phosphodiesterases (EC 3.1.4.46). To M.genitalium MG293.

This is an uncharacterized protein from Mycoplasma pneumoniae (strain ATCC 29342 / M129 / Subtype 1) (Mycoplasmoides pneumoniae).